A 182-amino-acid polypeptide reads, in one-letter code: Large ribosomal subunit protein uL5 (182 aa).

The protein belongs to the universal ribosomal protein uL5 family. As to quaternary structure, part of the 50S ribosomal subunit; part of the 5S rRNA/L5/L18/L25 subcomplex. Contacts the 5S rRNA and the P site tRNA. Forms a bridge to the 30S subunit in the 70S ribosome.

In terms of biological role, this is one of the proteins that bind and probably mediate the attachment of the 5S RNA into the large ribosomal subunit, where it forms part of the central protuberance. In the 70S ribosome it contacts protein S13 of the 30S subunit (bridge B1b), connecting the 2 subunits; this bridge is implicated in subunit movement. Contacts the P site tRNA; the 5S rRNA and some of its associated proteins might help stabilize positioning of ribosome-bound tRNAs. The chain is Large ribosomal subunit protein uL5 from Coxiella burnetii (strain CbuG_Q212) (Coxiella burnetii (strain Q212)).